A 691-amino-acid chain; its full sequence is UvrABC system protein C (691 aa).

A GIY-YIG domain is found at 20 to 97 (STSGVYLWKD…IKKHTPRYNI (78 aa)). The 36-residue stretch at 204-239 (DATVARLEKRMKRAVRQEAFEAAARIRDDIQAIRCI) folds into the UVR domain. The interval 662–691 (RSTTAPVREEYKEHEHDPQGESPGPGRKTD) is disordered. Over residues 668-680 (VREEYKEHEHDPQ) the composition is skewed to basic and acidic residues.

It belongs to the UvrC family. Interacts with UvrB in an incision complex.

The protein resides in the cytoplasm. Its function is as follows. The UvrABC repair system catalyzes the recognition and processing of DNA lesions. UvrC both incises the 5' and 3' sides of the lesion. The N-terminal half is responsible for the 3' incision and the C-terminal half is responsible for the 5' incision. This is UvrABC system protein C from Treponema pallidum (strain Nichols).